Consider the following 595-residue polypeptide: Solute carrier family 13 member 1 (595 aa).

The next 5 helical transmembrane spans lie at 13 to 33 (FLLV…IRSK), 40 to 60 (ILFV…ITAL), 77 to 97 (VASA…CLAT), 113 to 133 (VMMV…STAF), and 134 to 154 (LSMW…VEAV). The N-linked (GlcNAc...) asparagine glycan is linked to Asn174. The disordered stretch occupies residues 190–218 (QETNERKEKTKPALGSSNDKGKVSSKMET). Residues 208–218 (DKGKVSSKMET) show a composition bias toward basic and acidic residues. Transmembrane regions (helical) follow at residues 239–259 (LMCL…ITGT), 283–303 (SWFL…WIWL), 348–368 (IVTL…DPGF), 381–401 (GYVT…LIPA), 464–484 (PLGS…VTSL), 491–511 (PATI…IHVN), 512–532 (PLHI…LPVA), and 553–573 (AGLG…FTWI). Residue Asn591 is glycosylated (N-linked (GlcNAc...) asparagine).

It belongs to the SLC13A/DASS transporter (TC 2.A.47) family. NADC subfamily. Kidney and intestine.

Its subcellular location is the apical cell membrane. The enzyme catalyses sulfate(out) + 3 Na(+)(out) = sulfate(in) + 3 Na(+)(in). It carries out the reaction selenate(out) + 3 Na(+)(out) = selenate(in) + 3 Na(+)(in). The catalysed reaction is thiosulfate(out) + 3 Na(+)(out) = thiosulfate(in) + 3 Na(+)(in). In terms of biological role, sodium:sulfate symporter that mediates sulfate reabsorption in the kidney and small intestine. Can also mediate the transport of selenate and thiosulfate. This chain is Solute carrier family 13 member 1 (Slc13a1), found in Rattus norvegicus (Rat).